Consider the following 369-residue polypeptide: S-adenosylmethionine:tRNA ribosyltransferase-isomerase (369 aa).

It belongs to the QueA family. In terms of assembly, monomer.

The protein localises to the cytoplasm. The enzyme catalyses 7-aminomethyl-7-carbaguanosine(34) in tRNA + S-adenosyl-L-methionine = epoxyqueuosine(34) in tRNA + adenine + L-methionine + 2 H(+). The protein operates within tRNA modification; tRNA-queuosine biosynthesis. Functionally, transfers and isomerizes the ribose moiety from AdoMet to the 7-aminomethyl group of 7-deazaguanine (preQ1-tRNA) to give epoxyqueuosine (oQ-tRNA). The sequence is that of S-adenosylmethionine:tRNA ribosyltransferase-isomerase from Synechococcus sp. (strain CC9311).